Here is a 327-residue protein sequence, read N- to C-terminus: BarH-like 1 homeobox protein (327 aa).

Disordered regions lie at residues 1–90 (MEGS…AQSR), 113–181 (PYSS…PRKA), and 303–327 (LQGA…AQPR). The segment covering 33 to 54 (RSPLELSPRSESSSDCSSPASP) has biased composition (low complexity). Residues 79 to 90 (QPGQLSAPAQSR) are compositionally biased toward polar residues. 2 stretches are compositionally biased toward basic and acidic residues: residues 133–143 (AGEDFRDKLDK) and 152–166 (SEYK…EISS). A DNA-binding region (homeobox) is located at residues 178–237 (PRKARTAFTDHQLAQLERSFERQKYLSVQDRMELAASLNLTDTQVKTWYQNRRTKWKRQT). Over residues 308–318 (EPPPPLPPLPG) the composition is skewed to pro residues.

It belongs to the BAR homeobox family.

The protein resides in the nucleus. The polypeptide is BarH-like 1 homeobox protein (Barhl1) (Mus musculus (Mouse)).